Here is a 390-residue protein sequence, read N- to C-terminus: Chorismate synthase (390 aa).

NADP(+) contacts are provided by Arg39 and Arg45. FMN is bound by residues 132–134 (RSS), 253–254 (NA), Gly298, 313–317 (KPIPT), and Arg339.

Belongs to the chorismate synthase family. As to quaternary structure, homotetramer. FMNH2 is required as a cofactor.

It catalyses the reaction 5-O-(1-carboxyvinyl)-3-phosphoshikimate = chorismate + phosphate. The protein operates within metabolic intermediate biosynthesis; chorismate biosynthesis; chorismate from D-erythrose 4-phosphate and phosphoenolpyruvate: step 7/7. Its function is as follows. Catalyzes the anti-1,4-elimination of the C-3 phosphate and the C-6 proR hydrogen from 5-enolpyruvylshikimate-3-phosphate (EPSP) to yield chorismate, which is the branch point compound that serves as the starting substrate for the three terminal pathways of aromatic amino acid biosynthesis. This reaction introduces a second double bond into the aromatic ring system. The chain is Chorismate synthase from Bacillus licheniformis (strain ATCC 14580 / DSM 13 / JCM 2505 / CCUG 7422 / NBRC 12200 / NCIMB 9375 / NCTC 10341 / NRRL NRS-1264 / Gibson 46).